Here is a 356-residue protein sequence, read N- to C-terminus: Alanine racemase (356 aa).

Lysine 35 functions as the Proton acceptor; specific for D-alanine in the catalytic mechanism. The residue at position 35 (lysine 35) is an N6-(pyridoxal phosphate)lysine. Arginine 130 is a binding site for substrate. Tyrosine 253 functions as the Proton acceptor; specific for L-alanine in the catalytic mechanism. Residue methionine 301 coordinates substrate.

This sequence belongs to the alanine racemase family. Pyridoxal 5'-phosphate serves as cofactor.

It carries out the reaction L-alanine = D-alanine. It functions in the pathway amino-acid biosynthesis; D-alanine biosynthesis; D-alanine from L-alanine: step 1/1. Its function is as follows. Catalyzes the interconversion of L-alanine and D-alanine. May also act on other amino acids. This Sodalis glossinidius (strain morsitans) protein is Alanine racemase (alr).